The primary structure comprises 381 residues: GDP-mannose transporter (381 aa).

At 1-39 (MVESKKTDDYAIEMDKIDQGSKNFEAAAPPQPRSVPSSS) the chain is on the cytoplasmic side. Residues 40–60 (LSGNPVLPVLAYCGSSILMTV) traverse the membrane as a helical segment. Residues 61–68 (MNKYVLSG) are Lumenal-facing. A helical transmembrane segment spans residues 69–89 (LDFNLNFFLLCVQSIVCIIAI). Over 90–109 (QTCKFCGLITYRDFSADEAK) the chain is Cytoplasmic. Residues 110–126 (KWFPISLLLIGMIYTGS) traverse the membrane as a helical segment. Over 127–133 (KALQFLS) the chain is Lumenal. A helical membrane pass occupies residues 134-150 (IPVYTIFKNLTIILIAY). Topologically, residues 151–159 (GEVLWFGGS) are cytoplasmic. A helical membrane pass occupies residues 160–181 (VTGLTLFSFGLMVLSSIIAAWA). Residues 182–199 (DIKHAVESSGDTSAQVST) lie on the Lumenal side of the membrane. Residues 200–220 (LNAGYIWMLINCLCTSSYVLG) form a helical membrane-spanning segment. Topologically, residues 221–232 (MRKRIKLTNFKD) are cytoplasmic. The helical transmembrane segment at 233-253 (FDTMFYNNLLSIPVLVVLTGL) threads the bilayer. Over 254–273 (MEDWSSANIDRNFPQADRSS) the chain is Lumenal. The chain crosses the membrane as a helical span at residues 274–294 (IMFAMILSGLSSVFISYTSAW). Residues 295–302 (CVRVTSST) are Cytoplasmic-facing. The helical transmembrane segment at 303–323 (TYSMVGALNKLPIALSGLIFF) threads the bilayer. The Lumenal segment spans residues 324 to 326 (DAP). A helical transmembrane segment spans residues 327–347 (VTFPSVSAIAVGFVSGIVYAI). Over 348 to 381 (AKIKQNAKPKTGVLPTSNPLVSASSQSMRDSLRS) the chain is Cytoplasmic.

The protein belongs to the TPT transporter family. SLC35D subfamily. In terms of assembly, homooligomer.

It is found in the golgi apparatus membrane. Its subcellular location is the cytoplasmic vesicle membrane. The protein resides in the endoplasmic reticulum membrane. Its function is as follows. Involved in the import of GDP-mannose from the cytoplasm into the Golgi lumen. The sequence is that of GDP-mannose transporter (gmt1) from Aspergillus oryzae (strain ATCC 42149 / RIB 40) (Yellow koji mold).